We begin with the raw amino-acid sequence, 390 residues long: Chalcone synthase (390 aa).

The active site involves C164.

It belongs to the thiolase-like superfamily. Chalcone/stilbene synthases family.

The catalysed reaction is (E)-4-coumaroyl-CoA + 3 malonyl-CoA + 3 H(+) = 2',4,4',6'-tetrahydroxychalcone + 3 CO2 + 4 CoA. The protein operates within secondary metabolite biosynthesis; flavonoid biosynthesis. Functionally, the primary product of this enzyme is 4,2',4',6'-tetrahydroxychalcone (also termed naringenin-chalcone or chalcone) which can under specific conditions spontaneously isomerize into naringenin. The protein is Chalcone synthase (CHS) of Onobrychis viciifolia (Common sainfoin).